We begin with the raw amino-acid sequence, 436 residues long: Transcriptional regulator STP3 (436 aa).

The segment at 204–277 is disordered; the sequence is EPLDDEFVPP…TKRKYTKKKQ (74 aa). Positions 230-265 are enriched in low complexity; it reads ISPPASSDSSSSSSYVPQLIPSSSSSVTSNGDSPVS. Basic residues predominate over residues 268 to 277; sequence TKRKYTKKKQ. A C2H2-type zinc finger spans residues 315–337; it reads FDCPSCDASFKVKGYLTRHLKKH.

In terms of processing, activated by the amino acid-induced proteolytic removal of an N-terminal inhibitory domain.

It localises to the cell membrane. The protein localises to the nucleus. Transcription factor that activates genes required for degradation of extracellular protein and uptake of peptides such as the secreted aspartyl protease SAP2 or the oligopeptide transporter OPT1. Required for virulence. Synthesized as latent cytoplasmic precursor, which, upon a signal initiated by the plasma membrane SPS amino acid sensor system (including CSY1 and CSH3), becomes proteolytically activated and relocates to the nucleus, where it induces the expression of SPS-sensor-regulated genes. This chain is Transcriptional regulator STP3 (STP3), found in Candida albicans (strain SC5314 / ATCC MYA-2876) (Yeast).